Reading from the N-terminus, the 292-residue chain is 33 kDa chaperonin (292 aa).

2 disulfide bridges follow: Cys-230-Cys-232 and Cys-263-Cys-266.

It belongs to the HSP33 family. In terms of processing, under oxidizing conditions two disulfide bonds are formed involving the reactive cysteines. Under reducing conditions zinc is bound to the reactive cysteines and the protein is inactive.

It localises to the cytoplasm. In terms of biological role, redox regulated molecular chaperone. Protects both thermally unfolding and oxidatively damaged proteins from irreversible aggregation. Plays an important role in the bacterial defense system toward oxidative stress. The sequence is that of 33 kDa chaperonin from Salmonella typhi.